Here is a 269-residue protein sequence, read N- to C-terminus: Thyroxine 5-deiodinase (269 aa).

Residues 1–14 (MLPAPHTCCRLLQQ) are Cytoplasmic-facing. The chain crosses the membrane as a helical; Signal-anchor for type II membrane protein span at residues 15–35 (LLACCLLLPRFLLTVLLLWLL). At 36–269 (DFPCVRRRVI…TGNGALVIQV (234 aa)) the chain is on the extracellular side. Residue U133 is part of the active site. A non-standard amino acid (selenocysteine) is located at residue U133.

It belongs to the iodothyronine deiodinase family. As to quaternary structure, monomer. Homodimer. May undergo minor heretodimerization with DIO1 and DIO2.

It localises to the cell membrane. The protein localises to the endosome membrane. It carries out the reaction 3,3',5'-triiodo-L-thyronine + iodide + A + H(+) = L-thyroxine + AH2. The catalysed reaction is 3,3'-diiodo-L-thyronine + iodide + A + H(+) = 3,3',5-triiodo-L-thyronine + AH2. The enzyme catalyses 3-iodo-L-thyronine + iodide + A + H(+) = 3,5-diiodo-L-thyronine + AH2. It catalyses the reaction L-thyronine + iodide + A + H(+) = 3-iodo-L-thyronine + AH2. It carries out the reaction 3',5'-diiodo-L-thyronine + iodide + A + H(+) = 3,3',5'-triiodo-L-thyronine + AH2. The catalysed reaction is 3'-iodo-L-thyronine + iodide + A + H(+) = 3,3'-diiodo-L-thyronine + AH2. The enzyme catalyses 3,3',5'-triiodothyronamine + iodide + A + H(+) = 3,3',5,5'-tetraiodothyronamine + AH2. It catalyses the reaction 3',5'-diiodothyronamine + iodide + A + H(+) = 3,3',5'-triiodothyronamine + AH2. It carries out the reaction 3,3'-diiodothyronamine + iodide + A + H(+) = 3,3',5-triiodothyronamine + AH2. The catalysed reaction is 3-iodothyronamine + iodide + A + H(+) = 3,5-diiodothyronamine + AH2. The enzyme catalyses 3'-iodothyronamine + iodide + A + H(+) = 3,3'-diiodothyronamine + AH2. It catalyses the reaction thyronamine + iodide + A + H(+) = 3-iodothyronamine + AH2. Plays a crucial role in the metabolism of thyroid hormones (TH) and has specific roles in TH activation and inactivation by deiodination. Catalyzes the deiodination of L-thyroxine (T4) to 3,3',5'-triiodothyronine (rT3), 3,5-diiodothyronine (3,5-T2) to 3-monoiodothyronine (3-T1), rT3 to 3',5'-diiodothyronine (3',5'-T2) and 3,3'-diiodothyronine (3,3'-T2) to 3'-monoiodothyronine (3'-T1) via inner-ring deiodination (IRD). Catalyzes the deiodination of 3,5,3'-triiodothyronine (T3) to 3,3'-diiodothyronine (3,3'-T2) via IRD. Catalyzes the deiodination of 3-T1 to L-thyronine (T0) via outer-ring deiodination (ORD). Catalyzes the tyrosyl ring deiodinations of 3,3',5,5'-tetraiodothyronamine, 3,3',5'-triiodothyronamine, 3,5,3'-triiodothyronamine, 3,5-diiodothyronamine, 3,3'-diiodothyronamine and 3-iodothyronamine. The chain is Thyroxine 5-deiodinase (dio3) from Aquarana catesbeiana (American bullfrog).